The following is a 173-amino-acid chain: NADH-ubiquinone oxidoreductase chain 6 (173 aa).

The next 5 helical transmembrane spans lie at 1-21, 27-47, 48-68, 87-107, and 139-159; these read MTYF…AVAS, YGVV…LSLG, ASFV…VVFV, VIGY…IGGF, and WGAG…FVVL.

Belongs to the complex I subunit 6 family.

Its subcellular location is the mitochondrion membrane. The catalysed reaction is a ubiquinone + NADH + 5 H(+)(in) = a ubiquinol + NAD(+) + 4 H(+)(out). In terms of biological role, core subunit of the mitochondrial membrane respiratory chain NADH dehydrogenase (Complex I) that is believed to belong to the minimal assembly required for catalysis. Complex I functions in the transfer of electrons from NADH to the respiratory chain. The immediate electron acceptor for the enzyme is believed to be ubiquinone. This Brachyramphus brevirostris (Kittlitz's murrelet) protein is NADH-ubiquinone oxidoreductase chain 6 (MT-ND6).